The sequence spans 617 residues: Vacuolar protein sorting-associated protein 33A (617 aa).

Positions 268–287 are disordered; the sequence is NFPSDGALPGGGGSGPRVEE.

This sequence belongs to the STXBP/unc-18/SEC1 family. Component of the class C core vacuole/endosome tethering (CORVET) complex composed of at least Vps8, dor/Vps18, car/Vps33A and Vps16A; unlike in other species, Vps11 is not part of the Drosophila complex. Due to the reduced number of components the Drosophila CORVET complex is often referred to as the miniCORVET complex. Interacts with ema. Component of the homotypic fusion and vacuole protein sorting (HOPS) complex, composed of Vps16A, car/Vps33A, dor/Vps18, Vps39, Vps11 and lt/Vps41. The tethering complex core made up of Vps16A, car/Vps33A and dor/Vps18 and shared by both HOPS and CORVET, preferentially associates with CORVET specific Vps8 over HOPS specific lt/Vps41. Interacts with Syx17 (via SNARE domain); the interaction requires Vps16A, may involve additional components of the HOPS complex and may promote assembly of the Syx17-Snap29-Vamp7 trans-SNARE complex.

It localises to the early endosome. It is found in the late endosome membrane. The protein resides in the lysosome membrane. Functionally, core component of the class C core vacuole/endosome tethering (CORVET) and the homotypic fusion and vacuole protein sorting (HOPS) tethering complexes involved in endo-lysosomal vesicle trafficking and lysosome biogenesis. The CORVET complex facilitates docking and fusion of endosomal vesicles during endosome maturation, acts upstream of HOPS, but is not involved in autophagic flux. The CORVET complex may cooperate with the early endosomal tether Rbsn-5 to mediate endosomal fusion. The HOPS complex facilitates docking and fusion of lysosomes with late endosomes and several other types of vesicles. The HOPS complex is also involved in autophagy and crinophagy (the elimination of unused secretory granules through their fusion with lysosomes). The HOPS complex probably instigates autophagosome-lysosome fusion by binding autophagosome associated Syx17/syntaxin 17 and promoting assembly of the trans-SNARE complex. Independent of Syx17/syntaxin 17 HOPS is involved in biosynthetic transport to lysosomes and lysosome-related organelles such as eye-pigment granules. Required for endocytic degradation of boss/bride of sevenless and N/Notch in developing ommatidia. The sequence is that of Vacuolar protein sorting-associated protein 33A from Drosophila melanogaster (Fruit fly).